The primary structure comprises 172 residues: Signal peptidase complex catalytic subunit SEC11 (172 aa).

Residues 1 to 14 (MLSSLQNPRQAAAQ) are Cytoplasmic-facing. The chain crosses the membrane as a helical; Signal-anchor for type II membrane protein span at residues 15-35 (LMNFAMILSTAFMMWKGLSVA). At 36–172 (TDSPSPIVVV…MGLLVVIQRE (137 aa)) the chain is on the lumenal side. Residues serine 49, histidine 90, and aspartate 115 each act as charge relay system in the active site. Residues 158 to 169 (VMLGIMGLLVVI) form a C-terminal short (CTS) helix region.

Belongs to the peptidase S26B family. In terms of assembly, component of the signal peptidase complex (SPC) composed of a catalytic subunit SEC11 and three accessory subunits SPC1, SPC2 and SPC3. The complex induces a local thinning of the ER membrane which is used to measure the length of the signal peptide (SP) h-region of protein substrates. This ensures the selectivity of the complex towards h-regions shorter than 18-20 amino acids. SPC associates with the translocon complex.

The protein resides in the endoplasmic reticulum membrane. The enzyme catalyses Cleavage of hydrophobic, N-terminal signal or leader sequences from secreted and periplasmic proteins.. Functionally, catalytic component of the signal peptidase complex (SPC) which catalyzes the cleavage of N-terminal signal sequences from nascent proteins as they are translocated into the lumen of the endoplasmic reticulum. Specifically cleaves N-terminal signal peptides that contain a hydrophobic alpha-helix (h-region) shorter than 18-20 amino acids. The chain is Signal peptidase complex catalytic subunit SEC11 (SEC11) from Metarhizium robertsii (strain ARSEF 23 / ATCC MYA-3075) (Metarhizium anisopliae (strain ARSEF 23)).